The chain runs to 136 residues: Large ribosomal subunit protein eL27 (136 aa).

The KOW domain maps to 5-40 (MKPGKVVMVLAGRYAGRKAVIVKNIDDGTADRPYSH).

The protein belongs to the eukaryotic ribosomal protein eL27 family. Component of the large ribosomal subunit.

The protein localises to the cytoplasm. It localises to the cytosol. The protein resides in the rough endoplasmic reticulum. In terms of biological role, component of the large ribosomal subunit. In Danio rerio (Zebrafish), this protein is Large ribosomal subunit protein eL27 (rpl27).